The following is a 1073-amino-acid chain: Error-prone DNA polymerase (1073 aa).

Positions 41 to 73 are disordered; sequence EAEPECLSTPRPGPGSTEVPGERRGSRQGERSG. A compositionally biased stretch (basic and acidic residues) spans 60-73; that stretch reads PGERRGSRQGERSG.

Belongs to the DNA polymerase type-C family. DnaE2 subfamily.

The protein localises to the cytoplasm. It catalyses the reaction DNA(n) + a 2'-deoxyribonucleoside 5'-triphosphate = DNA(n+1) + diphosphate. Functionally, DNA polymerase involved in damage-induced mutagenesis and translesion synthesis (TLS). It is not the major replicative DNA polymerase. The polypeptide is Error-prone DNA polymerase (Corynebacterium efficiens (strain DSM 44549 / YS-314 / AJ 12310 / JCM 11189 / NBRC 100395)).